A 527-amino-acid polypeptide reads, in one-letter code: GMP synthase [glutamine-hydrolyzing] (527 aa).

Residues 11 to 209 (RILILDFGSQ…VLNICGCENL (199 aa)) enclose the Glutamine amidotransferase type-1 domain. The active-site Nucleophile is cysteine 88. Active-site residues include histidine 183 and glutamate 185. A GMPS ATP-PPase domain is found at 210-402 (WTSANIIEDA…LGLPYNMLYR (193 aa)). An ATP-binding site is contributed by 237–243 (SGGVDSS).

In terms of assembly, homodimer.

It catalyses the reaction XMP + L-glutamine + ATP + H2O = GMP + L-glutamate + AMP + diphosphate + 2 H(+). It functions in the pathway purine metabolism; GMP biosynthesis; GMP from XMP (L-Gln route): step 1/1. Its function is as follows. Catalyzes the synthesis of GMP from XMP. The protein is GMP synthase [glutamine-hydrolyzing] of Photobacterium profundum (strain SS9).